The chain runs to 243 residues: Variant surface antigen E (243 aa).

The signal sequence occupies residues 1–29 (MKKSIFSKKLLVSFGSLVTLAAIPLIAIS). The N-palmitoyl cysteine moiety is linked to residue Cys-30. Residue Cys-30 is the site of S-diacylglycerol cysteine attachment. The disordered stretch occupies residues 34–243 (TDNLSQSQQP…TTSDGQNQNK (210 aa)). The segment covering 52–92 (GTNTENGSNNGSGSGTTNSSGGTNQSGSASGNGSSNSSVST) has biased composition (low complexity). Positions 93–243 (PDGQHSNPSN…TTSDGQNQNK (151 aa)) are enriched in polar residues. 11 consecutive repeat copies span residues 97-109 (HSNP…SDPK), 110-122 (ESNP…SDPK), 123-135 (ESNP…SDGQ), 136-148 (HSNP…SDPK), 149-161 (ESNP…SDGQ), 162-174 (HSNP…SDGQ), 175-187 (HSNP…SDGQ), 188-200 (HSNP…SDGQ), 201-213 (HSNP…SDGQ), 214-226 (HSNP…SDGQ), and 227-239 (HSNP…SDGQ). The 11 X 13 AA tandem repeats stretch occupies residues 97 to 239 (HSNPSNPTTS…PSNPTTSDGQ (143 aa)).

The protein localises to the cell membrane. Its function is as follows. Responsible for the antigenic diversity for host adaptation. Expression in E.coli of a construct containing vlpD, vlpE, and vlpF yields antigenically distinguishable products corresponding to each gene. The chain is Variant surface antigen E (vlpE) from Mesomycoplasma hyorhinis (Mycoplasma hyorhinis).